A 408-amino-acid chain; its full sequence is CinA-like protein (408 aa).

It belongs to the CinA family.

The protein is CinA-like protein of Thermotoga sp. (strain RQ2).